The following is a 368-amino-acid chain: Phosphate acyltransferase (368 aa).

The disordered stretch occupies residues 335 to 368 (VSLGDGEHDAGGAGPASPAAGHHAEPSAAQSSKA). Residues 349 to 368 (PASPAAGHHAEPSAAQSSKA) show a composition bias toward low complexity.

Belongs to the PlsX family. As to quaternary structure, homodimer. Probably interacts with PlsY.

The protein resides in the cytoplasm. The catalysed reaction is a fatty acyl-[ACP] + phosphate = an acyl phosphate + holo-[ACP]. It participates in lipid metabolism; phospholipid metabolism. In terms of biological role, catalyzes the reversible formation of acyl-phosphate (acyl-PO(4)) from acyl-[acyl-carrier-protein] (acyl-ACP). This enzyme utilizes acyl-ACP as fatty acyl donor, but not acyl-CoA. This Burkholderia multivorans (strain ATCC 17616 / 249) protein is Phosphate acyltransferase.